The primary structure comprises 357 residues: Alanine racemase (357 aa).

Lys34 (proton acceptor; specific for D-alanine) is an active-site residue. Lys34 carries the N6-(pyridoxal phosphate)lysine modification. A substrate-binding site is contributed by Arg130. Tyr253 serves as the catalytic Proton acceptor; specific for L-alanine. A substrate-binding site is contributed by Met301.

Belongs to the alanine racemase family. It depends on pyridoxal 5'-phosphate as a cofactor.

The catalysed reaction is L-alanine = D-alanine. Its pathway is amino-acid biosynthesis; D-alanine biosynthesis; D-alanine from L-alanine: step 1/1. In terms of biological role, catalyzes the interconversion of L-alanine and D-alanine. May also act on other amino acids. This is Alanine racemase (alr) from Mannheimia succiniciproducens (strain KCTC 0769BP / MBEL55E).